Here is a 321-residue protein sequence, read N- to C-terminus: Phospho-N-acetylmuramoyl-pentapeptide-transferase (321 aa).

A run of 10 helical transmembrane segments spans residues 6–26 (MLIP…LFIG), 53–73 (TMGG…VGIW), 77–97 (LTLS…LGFY), 121–141 (ILGA…HTLW), 144–164 (IIGN…WLVG), 175–195 (LDGL…IIAA), 200–220 (TDVL…LMFN), 226–246 (IFMG…VAIL), 251–271 (WSLL…ILQV), and 301–321 (IDLT…AFFL).

The protein belongs to the glycosyltransferase 4 family. MraY subfamily. Mg(2+) is required as a cofactor.

The protein localises to the cell membrane. It carries out the reaction UDP-N-acetyl-alpha-D-muramoyl-L-alanyl-gamma-D-glutamyl-L-lysyl-D-alanyl-D-alanine + di-trans,octa-cis-undecaprenyl phosphate = Mur2Ac(oyl-L-Ala-gamma-D-Glu-L-Lys-D-Ala-D-Ala)-di-trans,octa-cis-undecaprenyl diphosphate + UMP. It functions in the pathway cell wall biogenesis; peptidoglycan biosynthesis. Functionally, catalyzes the initial step of the lipid cycle reactions in the biosynthesis of the cell wall peptidoglycan: transfers peptidoglycan precursor phospho-MurNAc-pentapeptide from UDP-MurNAc-pentapeptide onto the lipid carrier undecaprenyl phosphate, yielding undecaprenyl-pyrophosphoryl-MurNAc-pentapeptide, known as lipid I. The chain is Phospho-N-acetylmuramoyl-pentapeptide-transferase from Lacticaseibacillus paracasei (strain ATCC 334 / BCRC 17002 / CCUG 31169 / CIP 107868 / KCTC 3260 / NRRL B-441) (Lactobacillus paracasei).